Reading from the N-terminus, the 297-residue chain is Homoserine kinase (297 aa).

82-92 (PLTRGLGSSAS) contributes to the ATP binding site.

It belongs to the GHMP kinase family. Homoserine kinase subfamily.

It is found in the cytoplasm. It catalyses the reaction L-homoserine + ATP = O-phospho-L-homoserine + ADP + H(+). It functions in the pathway amino-acid biosynthesis; L-threonine biosynthesis; L-threonine from L-aspartate: step 4/5. Its function is as follows. Catalyzes the ATP-dependent phosphorylation of L-homoserine to L-homoserine phosphate. The sequence is that of Homoserine kinase from Bacillus thuringiensis subsp. konkukian (strain 97-27).